Reading from the N-terminus, the 123-residue chain is Transmembrane protein 254 (123 aa).

The next 3 membrane-spanning stretches (helical) occupy residues 15–35 (LFWF…VFWP), 63–83 (NGYW…LVLC), and 95–115 (LLWF…LFAY).

Its subcellular location is the membrane. In Rattus norvegicus (Rat), this protein is Transmembrane protein 254 (Tmem254).